The following is a 471-amino-acid chain: Nitrosourea synthase (471 aa).

The segment at 177–328 (MWLVQFAPDF…GRMAREKIIK (152 aa)) is HO-like. Positions 189, 215, 225, 281, 311, 315, 318, 407, 409, and 448 each coordinate Fe(2+). The tract at residues 397-459 (VEPRGELSNT…ANIESDECVY (63 aa)) is cupin.

In terms of assembly, homodimer. The cofactor is Fe(2+).

It catalyses the reaction N(omega)-methyl-L-arginine + 2 NADH + 3 O2 + H(+) = N(delta)-hydroxy-N(omega)-methyl-N(omega)-nitroso-L-citrulline + 2 NAD(+) + 3 H2O. The catalysed reaction is N(omega)-methyl-L-arginine + NADH + O2 + H(+) = N(delta)-hydroxy-N(omega)-methyl-L-arginine + NAD(+) + H2O. It carries out the reaction N(delta)-hydroxy-N(omega)-methyl-L-arginine + NADH + O2 = N(delta),N(omega')-dihydroxy-N(omega)-methyl-L-arginine + NAD(+) + H2O. The enzyme catalyses N(delta),N(omega')-dihydroxy-N(omega)-methyl-L-arginine + O2 = N(delta)-hydroxy-N(omega)-methyl-N(omega)-nitroso-L-citrulline + H2O. It catalyses the reaction 2 N(delta)-hydroxy-N(omega)-methyl-N(omega)-nitroso-L-citrulline + AH2 = 2 N(delta)-hydroxy-N(omega)-methyl-L-citrulline + 2 nitric oxide + A. It participates in antibiotic biosynthesis. Involved in the biosynthesis of the glucosamine-nitrosourea antibiotic streptozotocin (SZN). Catalyzes a complex multi-step reaction: the overall reaction is an oxidative rearrangement of the guanidine group of N(omega)-methyl-L-arginine (L-NMA), generating an N-nitrosourea product. SznF first hydroxylates L-NMA to form N(delta)-hydroxy-N(omega)-methyl-L-arginine (L-HMA), which is further hydroxylated to give N(delta)-hydroxy-N(omega)-hydroxy-N(omega)-methyl-L-arginine (L-DHMA). Subsequently, an oxidative rearrangement converts this intermediate to N(delta)-hydroxy-N(omega)-methyl-N(omega)-nitroso-L-citrulline. This product is unstable, and degrades non-enzymically into nitric oxide and the denitrosated product N(delta)-hydroxy-N(omega)-methyl-L-citrulline. The sequence is that of Nitrosourea synthase from Streptomyces achromogenes subsp. streptozoticus.